The chain runs to 158 residues: GTP-dependent dephospho-CoA kinase (158 aa).

Asp-35, Ile-36, Val-37, Asp-54, Lys-56, Glu-109, and Asp-132 together coordinate GTP.

The protein belongs to the GTP-dependent DPCK family.

It catalyses the reaction 3'-dephospho-CoA + GTP = GDP + CoA + H(+). Its pathway is cofactor biosynthesis; coenzyme A biosynthesis. Catalyzes the GTP-dependent phosphorylation of the 3'-hydroxyl group of dephosphocoenzyme A to form coenzyme A (CoA). The chain is GTP-dependent dephospho-CoA kinase from Methanocaldococcus jannaschii (strain ATCC 43067 / DSM 2661 / JAL-1 / JCM 10045 / NBRC 100440) (Methanococcus jannaschii).